The sequence spans 507 residues: Glycerol kinase (507 aa).

Position 14 (T14) interacts with ADP. Residues T14, T15, and S16 each coordinate ATP. Sn-glycerol 3-phosphate is bound at residue T14. R18 contacts ADP. Residues R84, E85, Y137, and D247 each coordinate sn-glycerol 3-phosphate. Residues R84, E85, Y137, D247, and Q248 each coordinate glycerol. Residues T269 and G312 each coordinate ADP. The ATP site is built by T269, G312, Q316, and G413. Residues G413 and N417 each coordinate ADP.

This sequence belongs to the FGGY kinase family.

The catalysed reaction is glycerol + ATP = sn-glycerol 3-phosphate + ADP + H(+). It functions in the pathway polyol metabolism; glycerol degradation via glycerol kinase pathway; sn-glycerol 3-phosphate from glycerol: step 1/1. Its activity is regulated as follows. Inhibited by fructose 1,6-bisphosphate (FBP). In terms of biological role, key enzyme in the regulation of glycerol uptake and metabolism. Catalyzes the phosphorylation of glycerol to yield sn-glycerol 3-phosphate. The polypeptide is Glycerol kinase (Psychromonas ingrahamii (strain DSM 17664 / CCUG 51855 / 37)).